We begin with the raw amino-acid sequence, 260 residues long: Imidazole glycerol phosphate synthase subunit HisF (260 aa).

Active-site residues include aspartate 11 and aspartate 130.

This sequence belongs to the HisA/HisF family. Heterodimer of HisH and HisF.

Its subcellular location is the cytoplasm. The catalysed reaction is 5-[(5-phospho-1-deoxy-D-ribulos-1-ylimino)methylamino]-1-(5-phospho-beta-D-ribosyl)imidazole-4-carboxamide + L-glutamine = D-erythro-1-(imidazol-4-yl)glycerol 3-phosphate + 5-amino-1-(5-phospho-beta-D-ribosyl)imidazole-4-carboxamide + L-glutamate + H(+). The protein operates within amino-acid biosynthesis; L-histidine biosynthesis; L-histidine from 5-phospho-alpha-D-ribose 1-diphosphate: step 5/9. In terms of biological role, IGPS catalyzes the conversion of PRFAR and glutamine to IGP, AICAR and glutamate. The HisF subunit catalyzes the cyclization activity that produces IGP and AICAR from PRFAR using the ammonia provided by the HisH subunit. This chain is Imidazole glycerol phosphate synthase subunit HisF, found in Endomicrobium trichonymphae.